Consider the following 1113-residue polypeptide: Carbamoyl phosphate synthase arginine-specific large chain (1113 aa).

A carboxyphosphate synthetic domain region spans residues 23-420; sequence QLIKGIDSVL…AFQKAFRQVD (398 aa). Arg-150, Arg-190, Gly-196, Gly-197, Lys-227, Leu-229, Glu-234, Gly-260, Ile-261, His-262, Gln-303, and Glu-317 together coordinate ATP. Positions 154-346 constitute an ATP-grasp 1 domain; that stretch reads ARALKEINMP…LAYTAAKIAL (193 aa). Residues Gln-303, Glu-317, and Asn-319 each coordinate Mg(2+). The Mn(2+) site is built by Gln-303, Glu-317, and Asn-319. Residues 421 to 568 are oligomerization domain; it reads PSLLGFQGSD…YVTYNAVKDD (148 aa). Residues 569–955 form a carbamoyl phosphate synthetic domain region; that stretch reads VTFGDNGIMV…SYWVALQGLM (387 aa). Residues 693–888 enclose the ATP-grasp 2 domain; the sequence is STILDTLGLD…FVEIAVKAFL (196 aa). The ATP site is built by Arg-729, Lys-768, Ile-770, Glu-775, Gly-800, Val-801, His-802, Ser-803, Gln-843, and Glu-859. Residues Gln-843, Glu-859, and Asn-861 each contribute to the Mg(2+) site. 3 residues coordinate Mn(2+): Gln-843, Glu-859, and Asn-861. The segment at 956-1097 is allosteric domain; that stretch reads SFCVPLPPSG…EMRQSDGPET (142 aa). Positions 957–1113 constitute an MGS-like domain; it reads FCVPLPPSGI…WREYLGFKPT (157 aa).

It belongs to the CarB family. Heterodimer composed of 2 chains; the small (or glutamine) chain promotes the hydrolysis of glutamine to ammonia, which is used by the large (or ammonia) chain to synthesize carbamoyl phosphate. Requires Mg(2+) as cofactor. It depends on Mn(2+) as a cofactor.

It is found in the cytoplasm. The enzyme catalyses hydrogencarbonate + L-glutamine + 2 ATP + H2O = carbamoyl phosphate + L-glutamate + 2 ADP + phosphate + 2 H(+). It catalyses the reaction hydrogencarbonate + NH4(+) + 2 ATP = carbamoyl phosphate + 2 ADP + phosphate + 2 H(+). The protein operates within amino-acid biosynthesis; L-arginine biosynthesis; carbamoyl phosphate from bicarbonate: step 1/1. Functionally, large subunit of the arginine-specific carbamoyl phosphate synthase (CPSase). CPSase catalyzes the formation of carbamoyl phosphate from the ammonia moiety of glutamine, hydrogencarbonate, and phosphate donated by ATP, constituting the first step of 2 biosynthetic pathways, one leading to arginine and/or urea and the other to pyrimidine nucleotides. The large subunit (synthetase) binds the substrates ammonia (free or transferred from glutamine from the small subunit), hydrogencarbonate and ATP and carries out an ATP-coupled ligase reaction, activating hydrogencarbonate by forming carboxy phosphate which reacts with ammonia to form carbamoyl phosphate. The protein is Carbamoyl phosphate synthase arginine-specific large chain (CPA2) of Eremothecium gossypii (strain ATCC 10895 / CBS 109.51 / FGSC 9923 / NRRL Y-1056) (Yeast).